A 148-amino-acid polypeptide reads, in one-letter code: Large ribosomal subunit protein bL9 (148 aa).

It belongs to the bacterial ribosomal protein bL9 family.

Binds to the 23S rRNA. The chain is Large ribosomal subunit protein bL9 from Aeromonas salmonicida (strain A449).